Consider the following 246-residue polypeptide: Exosome complex component Rrp41 (246 aa).

It belongs to the RNase PH family. Rrp41 subfamily. As to quaternary structure, component of the archaeal exosome complex. Forms a hexameric ring-like arrangement composed of 3 Rrp41-Rrp42 heterodimers. The hexameric ring associates with a trimer of Rrp4 and/or Csl4 subunits.

It is found in the cytoplasm. Its function is as follows. Catalytic component of the exosome, which is a complex involved in RNA degradation. Has 3'-&gt;5' exoribonuclease activity. Can also synthesize heteromeric RNA-tails. The chain is Exosome complex component Rrp41 from Pyrobaculum islandicum (strain DSM 4184 / JCM 9189 / GEO3).